The sequence spans 881 residues: Band 4.1-like protein 1 (881 aa).

Met1 is subject to N-acetylmethionine. Residues 1-88 form a disordered region; the sequence is MTTETGPDSE…TPSKAQKSPQ (88 aa). A compositionally biased stretch (low complexity) spans 17–35; the sequence is EAPQQPEAAAAVTTPVTPA. Phosphothreonine is present on Thr30. The span at 38-50 shows a compositional bias: basic and acidic residues; that stretch reads GHPEANSNEKHPS. The residue at position 75 (Ser75) is a Phosphoserine. The span at 76–87 shows a compositional bias: polar residues; it reads ERTTPSKAQKSP. Position 79 is a phosphothreonine (Thr79). Positions 97-378 constitute an FERM domain; that stretch reads AICRVTLLDA…EHHTFFRLVS (282 aa). Tyr343 carries the post-translational modification Phosphotyrosine. A phosphoserine mark is found at Ser378, Ser430, and Ser437. The segment at 428 to 501 is disordered; that stretch reads SRSLDGAEFS…HKQEFLDKPE (74 aa). Basic and acidic residues predominate over residues 444–457; it reads ENHDAGPDGDKRDE. Residues Ser461 and Ser466 each carry the phosphoserine modification. Over residues 466-501 the composition is skewed to basic and acidic residues; sequence SEAEEGEVRTPTKIKELKPEQETTPRHKQEFLDKPE. At Thr475 the chain carries Phosphothreonine. The tract at residues 483 to 541 is spectrin--actin-binding; that stretch reads KPEQETTPRHKQEFLDKPEDVLLKHQASINELKRTLKEPNSKLIHRDRDWERERRLPSS. At Ser510 the chain carries Phosphoserine. Residues 514 to 538 are compositionally biased toward basic and acidic residues; it reads LKRTLKEPNSKLIHRDRDWERERRL. Residues 514–596 are disordered; sequence LKRTLKEPNS…QERDTVFLKD (83 aa). A phosphoserine mark is found at Ser540, Ser541, Ser544, and Ser546. The residue at position 550 (Thr550) is a Phosphothreonine. Over residues 550–577 the composition is skewed to basic and acidic residues; that stretch reads TPEKANERAGLREGSEEKVKPPRPRAPE. Phosphoserine is present on residues Ser564 and Ser578. A Phosphothreonine modification is found at Thr580. Ser639, Ser648, Ser650, Ser667, Ser672, Ser678, and Ser685 each carry phosphoserine. Residues 642–699 are disordered; that stretch reads ELDRDKSDSDTEGLLFSRDLNKGAPSQDDESGGIEDSPDRGACSTPDMPQFEPVKTET. Position 686 is a phosphothreonine (Thr686). Phosphoserine occurs at positions 722, 784, and 870. The segment at 746–881 is C-terminal (CTD); sequence SITTETISTT…EERDKKPQES (136 aa).

As to quaternary structure, interacts with AGAP2. Highest expression in brain, lower in heart, kidney, pancreas, placenta, lung and skeletal muscle.

The protein resides in the cytoplasm. The protein localises to the cytoskeleton. May function to confer stability and plasticity to neuronal membrane via multiple interactions, including the spectrin-actin-based cytoskeleton, integral membrane channels and membrane-associated guanylate kinases. The protein is Band 4.1-like protein 1 of Homo sapiens (Human).